A 321-amino-acid chain; its full sequence is uncharacterized protein (321 aa).

Residues 1-58 form the HTH lysR-type domain; the sequence is MTPAQLRAYSAVVRLGSVRAAAAELGLSDAGVSMHVAALRKELDDPLFTRTGAGLAFT. Residues 18-37 constitute a DNA-binding region (H-T-H motif); it reads VRAAAAELGLSDAGVSMHVA.

The protein belongs to the LysR transcriptional regulatory family.

This is an uncharacterized protein from Mycobacterium tuberculosis (strain CDC 1551 / Oshkosh).